The sequence spans 386 residues: Succinate--CoA ligase [ADP-forming] subunit beta (386 aa).

In terms of domain architecture, ATP-grasp spans 9–244 (KELLKQFGVT…LDEEDPAEIE (236 aa)). ATP contacts are provided by residues Lys46, 53 to 55 (GRG), Glu99, Ala102, and Glu107. Residues Asn199 and Asp213 each coordinate Mg(2+). Residues Asn264 and 321-323 (GIM) contribute to the substrate site.

It belongs to the succinate/malate CoA ligase beta subunit family. As to quaternary structure, heterotetramer of two alpha and two beta subunits. It depends on Mg(2+) as a cofactor.

It carries out the reaction succinate + ATP + CoA = succinyl-CoA + ADP + phosphate. It catalyses the reaction GTP + succinate + CoA = succinyl-CoA + GDP + phosphate. It functions in the pathway carbohydrate metabolism; tricarboxylic acid cycle; succinate from succinyl-CoA (ligase route): step 1/1. Its function is as follows. Succinyl-CoA synthetase functions in the citric acid cycle (TCA), coupling the hydrolysis of succinyl-CoA to the synthesis of either ATP or GTP and thus represents the only step of substrate-level phosphorylation in the TCA. The beta subunit provides nucleotide specificity of the enzyme and binds the substrate succinate, while the binding sites for coenzyme A and phosphate are found in the alpha subunit. The sequence is that of Succinate--CoA ligase [ADP-forming] subunit beta from Bordetella pertussis (strain Tohama I / ATCC BAA-589 / NCTC 13251).